The sequence spans 266 residues: Indole-3-glycerol phosphate synthase (266 aa).

This sequence belongs to the TrpC family.

It carries out the reaction 1-(2-carboxyphenylamino)-1-deoxy-D-ribulose 5-phosphate + H(+) = (1S,2R)-1-C-(indol-3-yl)glycerol 3-phosphate + CO2 + H2O. It functions in the pathway amino-acid biosynthesis; L-tryptophan biosynthesis; L-tryptophan from chorismate: step 4/5. This chain is Indole-3-glycerol phosphate synthase, found in Opitutus terrae (strain DSM 11246 / JCM 15787 / PB90-1).